The primary structure comprises 466 residues: Alpha-1,3-mannosyltransferase CMT1 (466 aa).

The tract at residues 1 to 23 is disordered; the sequence is MFRNTLRTFPRPATPSLPTSSHS. Over 1–33 the chain is Cytoplasmic; the sequence is MFRNTLRTFPRPATPSLPTSSHSPIARASLSKS. A helical; Signal-anchor for type II membrane protein transmembrane segment spans residues 34–54; sequence PLFVLSLVLVCIFFLSFLSHP. Over 55 to 466 the chain is Lumenal; the sequence is DPSARKLQWP…ETRWVQPWLE (412 aa).

Mg(2+) serves as cofactor. Mn(2+) is required as a cofactor. It depends on Co(2+) as a cofactor.

It is found in the golgi apparatus membrane. It functions in the pathway protein modification; protein glycosylation. Responsible for addition of mannose residues in an alpha-1,3 linkage to a polymannosly precursor. May be involved in synthesis of capsule glucuronoxylomannan. The polypeptide is Alpha-1,3-mannosyltransferase CMT1 (Cryptococcus neoformans var. neoformans serotype D (strain JEC21 / ATCC MYA-565) (Filobasidiella neoformans)).